A 347-amino-acid chain; its full sequence is GMP reductase (347 aa).

NADP(+) is bound at residue 108 to 131 (ADFEKTKQILDLNPALNFVCIDVA). K(+)-binding residues include G181 and G183. The Thioimidate intermediate role is filled by C186. An NADP(+)-binding site is contributed by 216–239 (IVSDGGCTTPGDVAKAFGGGADFV).

Belongs to the IMPDH/GMPR family. GuaC type 1 subfamily. In terms of assembly, homotetramer.

The enzyme catalyses IMP + NH4(+) + NADP(+) = GMP + NADPH + 2 H(+). Catalyzes the irreversible NADPH-dependent deamination of GMP to IMP. It functions in the conversion of nucleobase, nucleoside and nucleotide derivatives of G to A nucleotides, and in maintaining the intracellular balance of A and G nucleotides. This Shigella boydii serotype 18 (strain CDC 3083-94 / BS512) protein is GMP reductase.